The chain runs to 428 residues: MSSVVVVGTQWGDEGKGKITDYLSEKAEVVARYQGGNNAGHTIVFDGKKYKLHLIPSGIFYKDKICVIGNGMVIDPKALVEELAYLHDHGVDTSNLRISNRAHVILPYHIKLDIVEEDRKGANKIGTTRKGIGPAYMDKAARIGIRIADLLEKDTFAAKVAAVLEEKNRLFEKYYETDGFSAEEIVEEYFHYGEQIAKYVADTSVVLNDALDDGRRVLFEGAQGVMLDIDQGTYPFVTSSNPIAGGVTIGSGVGPSKIHHVVGVSKAYTTRVGDGPFPTELDDEIGDRIRKVGNEYGTTTGRPRRVGWFDSVVVRHARRVSGITDLSLNSIDVLTGLKTLKICTSYRYKGEVLDEFPASLNVLAECEPIYEELPGWEEDITGVKTLHELPENARTYVERVCQLTGIPLTVFSVGPDRSQTNMVRGVFA.

GTP-binding positions include Gly12–Lys18 and Gly40–Thr42. Asp13 serves as the catalytic Proton acceptor. Mg(2+) is bound by residues Asp13 and Gly40. Residues Asp13–Lys16, Asn38–His41, Thr128, Arg142, Gln223, Thr238, and Arg302 contribute to the IMP site. Residue His41 is the Proton donor of the active site. Residue Thr298 to Arg304 participates in substrate binding. GTP-binding positions include Arg304, Ser330–Asp332, and Ser412–Gly414.

Belongs to the adenylosuccinate synthetase family. As to quaternary structure, homodimer. Mg(2+) serves as cofactor.

The protein localises to the cytoplasm. It carries out the reaction IMP + L-aspartate + GTP = N(6)-(1,2-dicarboxyethyl)-AMP + GDP + phosphate + 2 H(+). The protein operates within purine metabolism; AMP biosynthesis via de novo pathway; AMP from IMP: step 1/2. Its function is as follows. Plays an important role in the de novo pathway of purine nucleotide biosynthesis. Catalyzes the first committed step in the biosynthesis of AMP from IMP. This chain is Adenylosuccinate synthetase, found in Shouchella clausii (strain KSM-K16) (Alkalihalobacillus clausii).